Consider the following 207-residue polypeptide: Ribosomal RNA small subunit methyltransferase G (207 aa).

S-adenosyl-L-methionine is bound by residues glycine 73, leucine 78, 124 to 125, and arginine 139; that span reads VE.

It belongs to the methyltransferase superfamily. RNA methyltransferase RsmG family.

The protein localises to the cytoplasm. It carries out the reaction guanosine(527) in 16S rRNA + S-adenosyl-L-methionine = N(7)-methylguanosine(527) in 16S rRNA + S-adenosyl-L-homocysteine. Its function is as follows. Specifically methylates the N7 position of guanine in position 527 of 16S rRNA. This is Ribosomal RNA small subunit methyltransferase G from Escherichia coli O1:K1 / APEC.